Consider the following 195-residue polypeptide: Imidazoleglycerol-phosphate dehydratase (195 aa).

Belongs to the imidazoleglycerol-phosphate dehydratase family.

The protein localises to the cytoplasm. The catalysed reaction is D-erythro-1-(imidazol-4-yl)glycerol 3-phosphate = 3-(imidazol-4-yl)-2-oxopropyl phosphate + H2O. It functions in the pathway amino-acid biosynthesis; L-histidine biosynthesis; L-histidine from 5-phospho-alpha-D-ribose 1-diphosphate: step 6/9. This chain is Imidazoleglycerol-phosphate dehydratase, found in Campylobacter curvus (strain 525.92).